The primary structure comprises 231 residues: Lytic polysaccharide monooxygenase-like protein X325 (231 aa).

A signal peptide spans 1 to 17 (MRLSLLVTLALTALIEA). Histidine 18 is a Cu(2+) binding site. Residues asparagine 34, asparagine 55, asparagine 98, asparagine 133, asparagine 174, and asparagine 180 are each glycosylated (N-linked (GlcNAc...) asparagine). 2 disulfides stabilise this stretch: cysteine 47–cysteine 157 and cysteine 122–cysteine 178. Isoleucine 202 is lipidated: GPI-anchor amidated isoleucine. Residues 203–231 (ASTTTGSAPRYYSWAGWLPLVAGAIWMAL) constitute a propeptide, removed in mature form.

The protein belongs to the X325 family. Cu(2+) serves as cofactor.

The protein resides in the cell membrane. Functionally, lytic polysaccharide monooxygenase-like protein that has diverged to biological functions other than polysaccharide degradation since it does not perform oxidative cleavage of polysaccharides. Acts as a cell surface-bound protein that functions in the copper-accumulation pathway. May also act as the major cell wall sensor that regulates MAP kinase-dependent hyphal anastomosis, the fusion of hyphal cells. The chain is Lytic polysaccharide monooxygenase-like protein X325 from Hypocrea jecorina (strain QM6a) (Trichoderma reesei).